The chain runs to 1303 residues: D-lysergyl-peptide-synthetase subunit 2 (1303 aa).

The tract at residues 256–653 (EWCRWTPSAV…CRKSTQVKLR (398 aa)) is adenylation (A) domain. In terms of domain architecture, Carrier spans 793-869 (APSNDIEEAF…ELARHTKLVA (77 aa)). Position 830 is an O-(pantetheine 4'-phosphoryl)serine (serine 830). The condensation (C) domain stretch occupies residues 905–1294 (EDVYPCTPLQ…HAAPRTLIGD (390 aa)).

Belongs to the NRP synthetase family.

It functions in the pathway alkaloid biosynthesis; ergot alkaloid biosynthesis. In terms of biological role, D-lysergyl-peptide-synthetase subunit 2; part of the gene cluster that mediates the biosynthesis of fungal ergot alkaloid. DmaW catalyzes the first step of ergot alkaloid biosynthesis by condensing dimethylallyl diphosphate (DMAP) and tryptophan to form 4-dimethylallyl-L-tryptophan. The second step is catalyzed by the methyltransferase easF that methylates 4-dimethylallyl-L-tryptophan in the presence of S-adenosyl-L-methionine, resulting in the formation of 4-dimethylallyl-L-abrine. The catalase easC and the FAD-dependent oxidoreductase easE then transform 4-dimethylallyl-L-abrine to chanoclavine-I which is further oxidized by easD in the presence of NAD(+), resulting in the formation of chanoclavine-I aldehyde. Agroclavine dehydrogenase easG then mediates the conversion of chanoclavine-I aldehyde to agroclavine via a non-enzymatic adduct reaction: the substrate is an iminium intermediate that is formed spontaneously from chanoclavine-I aldehyde in the presence of glutathione. The presence of easA is not required to complete this reaction. Further conversion of agroclavine to paspalic acid is a two-step process involving oxidation of agroclavine to elymoclavine and of elymoclavine to paspalic acid, the second step being performed by the elymoclavine oxidase cloA. Paspalic acid is then further converted to D-lysergic acid. Ergopeptines are assembled from D-lysergic acid and three different amino acids by the D-lysergyl-peptide-synthetases composed each of a monomudular and a trimodular nonribosomal peptide synthetase subunit. LpsB and lpsC encode the monomodular subunits responsible for D-lysergic acid activation and incorporation into the ergopeptine backbone. LpsA1 and A2 subunits encode the trimodular nonribosomal peptide synthetase assembling the tripeptide portion of ergopeptines. LpsA1 is responsible for formation of the major ergopeptine, ergotamine, and lpsA2 for alpha-ergocryptine, the minor ergopeptine of the total alkaloid mixture elaborated by C.purpurea. D-lysergyl-tripeptides are assembled by the nonribosomal peptide synthetases and released as N-(D-lysergyl-aminoacyl)-lactams. Cyclolization of the D-lysergyl-tripeptides is performed by the Fe(2+)/2-ketoglutarate-dependent dioxygenase easH which introduces a hydroxyl group into N-(D-lysergyl-aminoacyl)-lactam at alpha-C of the aminoacyl residue followed by spontaneous condensation with the terminal lactam carbonyl group. This Claviceps purpurea (strain 20.1) (Ergot fungus) protein is D-lysergyl-peptide-synthetase subunit 2.